The primary structure comprises 946 residues: MIESTTSHQDFQQRSMTGYALEHPSYRVRGALFRHQDDGRLLSGTSSNFFHVRSSSKITGCGGDLEVIHALELERSQHTGLPVRVTNVVVFGSNDVVRLIQPIEGTEDVIVNGDYHVSIVQSVELFESSTVSKSRILKLPGKIVAVNAEKHSNTELLLVFLLETGLYHYSFCAQTSDHFQCIQAFRCNRPITSGLLWRDSGLLHVAYYDGFVRVGVVHEQYDDMLLVKRVAVNRNNLSVLLDVVFEEIGRIQKFEDTEKQRREDMLTTSKCLSDKLVSEEEVVEGDTATEDFAKLKVDFKNQSIRCERVSQRLISLRKLITIIKSYMDMNDQIEQMIALLVDQLEELEKLEQLCDEVQKTGNQNLIGKSWIAVEEKRMVVDELIAKVNSDQIKKHSAEWGNKIDQIIDQLNGCSESAKDMRMIISQNIFEHRGDKKDVYTHFVLDSQSRDITLYCLSGLTTLAIYPRKGKRHTSKTTNIRKSQIFRVASISLDASFATCLTAACAMKSAEGVYVADQNAVFPIYFYSEKRYLDAGNQLQIPAFDSISSILIEPHQMILGSVTGGLLHLSFDFASNYEHFVVASSMLAHPISSGAVNCIKLLATGESLLALHCTDAEVVVSEKDQDRWHRVTHHTGGAHSIAVTPFSVDERGSFAVVASDTFVRLKALQYAEESLIGLHDLGESRAEDENGHPIEVLNVSLDPSMQYRQLPCKLRYAVGFSDKAIRTYVALLTGQHDFTVTEKFIAQIEPLFSVQNMICFHGRPMGCYVSCAKTLQIWNDLDRHQQKKLKSERMQLLKLSSSVTSMERTEGFLLVGFADDRLSIYEEKGNGAVDLVGTIENWHTGLNDRSVLGLRTRISKTSCGTRLFIHSLTAHHIVIHTVLVTSSKIEQHDFIVAHEHSMSQPIGFEFVSYKYFEFLVYGRGISNEKLSIEDRKRMDCFRDFEFN.

Residues 326–363 are a coiled coil; it reads YMDMNDQIEQMIALLVDQLEELEKLEQLCDEVQKTGNQ.

Functionally, may have a role in tumor suppression. This is Protein dct-6 from Caenorhabditis briggsae.